A 171-amino-acid chain; its full sequence is Putative phosphoesterase ABC1741 (171 aa).

Residue histidine 34 is the Proton donor of the active site. 2 short sequence motifs (HXTX) span residues 34–37 (HITL) and 116–119 (HITI). The Proton acceptor role is filled by histidine 116.

Belongs to the 2H phosphoesterase superfamily. YjcG family.

The protein is Putative phosphoesterase ABC1741 of Shouchella clausii (strain KSM-K16) (Alkalihalobacillus clausii).